A 724-amino-acid polypeptide reads, in one-letter code: Acyl-coenzyme A oxidase 2 (724 aa).

Positions 1–48 are disordered; sequence MAMLSQPNDGHDHPEKKDPDTTPKQVAGVISSQDPPHPAKDVAEERAR. 2 stretches are compositionally biased toward basic and acidic residues: residues 9 to 21 and 37 to 48; these read DGHD…DPDT and HPAKDVAEERAR.

Belongs to the acyl-CoA oxidase family. It depends on FAD as a cofactor.

The protein localises to the peroxisome. It carries out the reaction a 2,3-saturated acyl-CoA + O2 = a (2E)-enoyl-CoA + H2O2. The protein operates within lipid metabolism; peroxisomal fatty acid beta-oxidation. The polypeptide is Acyl-coenzyme A oxidase 2 (POX2) (Candida tropicalis (Yeast)).